Consider the following 349-residue polypeptide: UDP-3-O-acylglucosamine N-acyltransferase (349 aa).

Histidine 242 serves as the catalytic Proton acceptor.

The protein belongs to the transferase hexapeptide repeat family. LpxD subfamily. Homotrimer.

It catalyses the reaction a UDP-3-O-[(3R)-3-hydroxyacyl]-alpha-D-glucosamine + a (3R)-hydroxyacyl-[ACP] = a UDP-2-N,3-O-bis[(3R)-3-hydroxyacyl]-alpha-D-glucosamine + holo-[ACP] + H(+). The protein operates within bacterial outer membrane biogenesis; LPS lipid A biosynthesis. Functionally, catalyzes the N-acylation of UDP-3-O-acylglucosamine using 3-hydroxyacyl-ACP as the acyl donor. Is involved in the biosynthesis of lipid A, a phosphorylated glycolipid that anchors the lipopolysaccharide to the outer membrane of the cell. This chain is UDP-3-O-acylglucosamine N-acyltransferase, found in Cytophaga hutchinsonii (strain ATCC 33406 / DSM 1761 / CIP 103989 / NBRC 15051 / NCIMB 9469 / D465).